The following is a 243-amino-acid chain: MKIDFLTLFPEMFEGVLGSSILQKAQDKDAVRFRVVNFRAYSDNKHQTVDDYPYGGGAGMVLKPQPVFDAVEKLTAEAGGSPRIILVCPQGERYTQQKAEELAREEHLMFICGHYEGYDERIREHLSTDEISIGDFVLTGGELPAMMIADSVVRLLPGVLGKEESHLEDSFSTGLLEHPHYTRPADYKGLKVPDVLTSGNHAKIKEWRRKESLRRTFLRRPDLLENYPLSEEERKWISEWKNR.

S-adenosyl-L-methionine-binding positions include Gly-113 and Ile-133–Leu-138.

The protein belongs to the RNA methyltransferase TrmD family. Homodimer.

It localises to the cytoplasm. The enzyme catalyses guanosine(37) in tRNA + S-adenosyl-L-methionine = N(1)-methylguanosine(37) in tRNA + S-adenosyl-L-homocysteine + H(+). Functionally, specifically methylates guanosine-37 in various tRNAs. The sequence is that of tRNA (guanine-N(1)-)-methyltransferase from Bacillus licheniformis (strain ATCC 14580 / DSM 13 / JCM 2505 / CCUG 7422 / NBRC 12200 / NCIMB 9375 / NCTC 10341 / NRRL NRS-1264 / Gibson 46).